The chain runs to 361 residues: Peptide chain release factor 1 (361 aa).

Glutamine 237 carries the post-translational modification N5-methylglutamine.

Belongs to the prokaryotic/mitochondrial release factor family. Post-translationally, methylated by PrmC. Methylation increases the termination efficiency of RF1.

Its subcellular location is the cytoplasm. Its function is as follows. Peptide chain release factor 1 directs the termination of translation in response to the peptide chain termination codons UAG and UAA. The protein is Peptide chain release factor 1 of Alcanivorax borkumensis (strain ATCC 700651 / DSM 11573 / NCIMB 13689 / SK2).